Consider the following 295-residue polypeptide: Tetrahydromethanopterin S-methyltransferase subunit E (295 aa).

The next 7 helical transmembrane spans lie at 4–24 (MITG…AGAA), 60–80 (GEPV…FVLM), 87–107 (VIMA…TYAV), 140–160 (GFIV…PIPG), 161–181 (FAHP…IGAI), 234–254 (YGGP…FWNT), and 255–275 (IVFG…LLII).

This sequence belongs to the MtrE family. As to quaternary structure, the complex is composed of 8 subunits; MtrA, MtrB, MtrC, MtrD, MtrE, MtrF, MtrG and MtrH.

It localises to the cell membrane. The catalysed reaction is 5-methyl-5,6,7,8-tetrahydromethanopterin + coenzyme M + 2 Na(+)(in) = 5,6,7,8-tetrahydromethanopterin + methyl-coenzyme M + 2 Na(+)(out). Its pathway is one-carbon metabolism; methanogenesis from CO(2); methyl-coenzyme M from 5,10-methylene-5,6,7,8-tetrahydromethanopterin: step 2/2. Functionally, part of a complex that catalyzes the formation of methyl-coenzyme M and tetrahydromethanopterin from coenzyme M and methyl-tetrahydromethanopterin. This is an energy-conserving, sodium-ion translocating step. The sequence is that of Tetrahydromethanopterin S-methyltransferase subunit E from Methanothermobacter marburgensis (strain ATCC BAA-927 / DSM 2133 / JCM 14651 / NBRC 100331 / OCM 82 / Marburg) (Methanobacterium thermoautotrophicum).